Reading from the N-terminus, the 277-residue chain is Small ribosomal subunit protein uS2 (277 aa).

The segment at 255–277 (AVATTDEASAPSAAATETTTEEG) is disordered. Residues 257-277 (ATTDEASAPSAAATETTTEEG) are compositionally biased toward low complexity.

Belongs to the universal ribosomal protein uS2 family.

The chain is Small ribosomal subunit protein uS2 from Mycobacteroides abscessus (strain ATCC 19977 / DSM 44196 / CCUG 20993 / CIP 104536 / JCM 13569 / NCTC 13031 / TMC 1543 / L948) (Mycobacterium abscessus).